We begin with the raw amino-acid sequence, 602 residues long: Glutamyl-tRNA(Gln) amidotransferase subunit B, mitochondrial (602 aa).

The protein belongs to the GatB/GatE family. GatB subfamily. In terms of assembly, subunit of the heterotrimeric GatCAB amidotransferase (AdT) complex, composed of A, B and C subunits.

The protein localises to the mitochondrion. The enzyme catalyses L-glutamyl-tRNA(Gln) + L-glutamine + ATP + H2O = L-glutaminyl-tRNA(Gln) + L-glutamate + ADP + phosphate + H(+). In terms of biological role, allows the formation of correctly charged Gln-tRNA(Gln) through the transamidation of misacylated Glu-tRNA(Gln) in the mitochondria. The reaction takes place in the presence of glutamine and ATP through an activated gamma-phospho-Glu-tRNA(Gln). In Paracoccidioides lutzii (strain ATCC MYA-826 / Pb01) (Paracoccidioides brasiliensis), this protein is Glutamyl-tRNA(Gln) amidotransferase subunit B, mitochondrial.